We begin with the raw amino-acid sequence, 439 residues long: Protein ABHD8 (439 aa).

Disordered regions lie at residues H54–K75 and E122–R148. Pro residues predominate over residues A58 to P67. Residues G138–R148 are compositionally biased toward basic residues. The AB hydrolase-1 domain occupies V169–G271. Active-site charge relay system residues include S244, D362, and H390. The tract at residues E415–K439 is disordered.

It belongs to the AB hydrolase superfamily. As to quaternary structure, interacts with NLRP3 (via NACHT and LLR domains); this interaction is enhanced in the presence of NLRP3 inflammasome inducers, such as ATP, nigericin, silica, or alum. Interacts with ZDHHC12.

It localises to the cytoplasm. Negatively regulates NLRP3-driven inflammation. Promotes NLRP3 degradation through the chaperone-mediated autophagy (CMA) pathway, hence attenuating inflammasome activation and IL1B secretion. Acts by recruiting palmitoyltransferase ZDHHC12 to NLRP3, facilitating NLRP3 palmitoylation and subsequent degradation. The protein is Protein ABHD8 of Mus musculus (Mouse).